Reading from the N-terminus, the 36-residue chain is Photosystem I reaction center subunit VIII (36 aa).

The chain crosses the membrane as a helical span at residues 7-29 (PSILVPLVGILLPAVTMASLFLY).

This sequence belongs to the PsaI family.

It localises to the plastid. It is found in the chloroplast thylakoid membrane. In terms of biological role, may help in the organization of the PsaL subunit. The chain is Photosystem I reaction center subunit VIII from Adiantum capillus-veneris (Maidenhair fern).